A 77-amino-acid chain; its full sequence is Conotoxin VnMKLT1-012 (77 aa).

The signal sequence occupies residues 1–22; sequence MKLTCMMIVAVLFLTAWTFVTA. The propeptide occupies 23-48; that stretch reads DDSRNGLDYLFPKARHEMNPKASRDI. Disulfide bonds link C51-C68, C58-C72, and C67-C76.

The protein belongs to the conotoxin O1 superfamily. In terms of tissue distribution, expressed by the venom duct.

It localises to the secreted. The sequence is that of Conotoxin VnMKLT1-012 from Conus ventricosus (Mediterranean cone).